Here is a 478-residue protein sequence, read N- to C-terminus: Centromere DNA-binding protein complex CBF3 subunit C (478 aa).

Residues Glu206–Thr251 form a disordered region. A compositionally biased stretch (polar residues) spans Gly217 to Ile230. Over residues Lys231–Arg240 the composition is skewed to basic residues.

As to quaternary structure, component of the CBF3 copmplex, which is formed of CBF3A/CBF2, CBF3B/CEP3, CBF3C/CTF13 and CBF3D. CBF3C interacts with CBF3D and SGT1.

It localises to the nucleus. The protein localises to the chromosome. Its subcellular location is the centromere. In terms of biological role, acts as a central component of the centromere DNA-binding protein complex CBF3, which is essential for chromosome segregation and movement of centromeres along microtubules. CBF3 is required for the recruitment of other kinetochore complexes to CEN DNA. It plays a role in the attachment of chromosomes to the spindle and binds selectively to a highly conserved DNA sequence called CDEIII, found in centromers and in several promoters. The association of CBF3C with CBF3D and SGT1 is required for CBF3C activation and CBF3 assembly. In Saccharomyces cerevisiae (strain ATCC 204508 / S288c) (Baker's yeast), this protein is Centromere DNA-binding protein complex CBF3 subunit C (CTF13).